A 1806-amino-acid chain; its full sequence is Collagen alpha-1(XI) chain (1806 aa).

The N-terminal stretch at 1 to 35 (MEPWSSRWKTKRWLWDFTVTTLALTFLFQAREVRG) is a signal peptide. The propeptide at 36–511 (AAPVDVLKAL…DGSKGPTISA (476 aa)) is N-terminal propeptide. Cystine bridges form between Cys-61/Cys-243 and Cys-182/Cys-236. The region spanning 71-243 (DTAYRVSKQA…DYCEHYSPDC (173 aa)) is the Laminin G-like domain. The interval 230-419 (KAAYDYCEHY…DITETSINGH (190 aa)) is nonhelical region. The triple-helical region (interrupted) stretch occupies residues 420-508 (GAYGEKGQKG…YGGDGSKGPT (89 aa)). Residues 439-508 (LVEGPPGPAG…YGGDGSKGPT (70 aa)) are disordered. A Collagen-like 1 domain is found at 442–490 (GPPGPAGPAGIMGPPGLQGPTGPPGDPGDRGPPGRPGLPGADGLPGPPG). Composition is skewed to low complexity over residues 449–461 (PAGI…LQGP) and 479–496 (LPGA…LMLP). Residues 509 to 511 (ISA) form a short nonhelical segment region. The telopeptide stretch occupies residues 512-528 (QEAQAQAILQQARIALR). The interval 528–1563 (RGPPGPMGLT…TRRHTEGMQA (1036 aa)) is disordered. The segment at 529-1542 (GPPGPMGLTG…PGSPGPPGEV (1014 aa)) is triple-helical region. Collagen-like domains follow at residues 532–586 (GPMG…GADG), 583–641 (GADG…EIGP), 616–674 (GERG…VDGP), and 643–699 (GLPG…PGPQ). Composition is skewed to gly residues over residues 541 to 550 (GPVGGPGSSG) and 583 to 592 (GADGGRGMPG). Lys-612 carries the post-translational modification Allysine. Over residues 641–662 (PRGLPGEAGPRGLLGPRGTPGA) the composition is skewed to low complexity. Over residues 699-710 (QGLPGPQGPIGP) the composition is skewed to pro residues. Low complexity predominate over residues 717 to 728 (QGKPGLAGLPGA). Positions 807–816 (RGEDGPEGPK) are enriched in basic and acidic residues. 6 stretches are compositionally biased toward low complexity: residues 875-903 (KPGP…PGPK), 918-927 (RGPQGPQGPV), 941-960 (KDGL…QGKT), 971-981 (PQGPTGETGPI), 1032-1041 (RGLPGAQGAP), and 1058-1074 (SPGE…IGLP). The span at 1076–1085 (RPGPQGPPGP) shows a compositional bias: pro residues. The span at 1086 to 1110 (AGEKGAPGEKGPQGPAGRDGVQGPV) shows a compositional bias: low complexity. Over residues 1162-1171 (GIAGGDGEPG) the composition is skewed to gly residues. Composition is skewed to pro residues over residues 1218 to 1229 (MGPPGPPGPRGP) and 1343 to 1362 (QPGP…PGKR). Low complexity-rich tracts occupy residues 1385–1394 (AEGPPGKTGP) and 1419–1428 (QGLPGAAGQD). Collagen-like domains follow at residues 1393–1450 (GPVG…GSKG), 1429–1487 (GPPG…AKGD), and 1483–1541 (GAKG…PPGE). The span at 1430 to 1439 (PPGPMGPPGL) shows a compositional bias: pro residues. Lys-1452 is modified (allysine). Residues 1455–1464 (PGLIGLIGPP) show a composition bias toward low complexity. Over residues 1483 to 1492 (GAKGDGGIPG) the composition is skewed to gly residues. 2 stretches are compositionally biased toward pro residues: residues 1493-1509 (PAGP…PGPQ) and 1530-1539 (PGPPGSPGPP). The interval 1543 to 1563 (IQPLPILSSKKTRRHTEGMQA) is nonhelical region (C-terminal). Residues 1564–1806 (DADDNILDYS…FEVGPVCFLG (243 aa)) constitute a propeptide, C-terminal propeptide. One can recognise a Fibrillar collagen NC1 domain in the interval 1577–1805 (EEIFGSLNSL…GFEVGPVCFL (229 aa)). Cys-1607 and Cys-1639 are joined by a disulfide. Positions 1625, 1627, 1628, 1630, and 1633 each coordinate Ca(2+). Residue Asn-1640 is glycosylated (N-linked (GlcNAc...) asparagine). 2 disulfide bridges follow: Cys-1648-Cys-1803 and Cys-1714-Cys-1757.

The protein belongs to the fibrillar collagen family. Trimers composed of three different chains: alpha 1(XI), alpha 2(XI), and alpha 3(XI). Alpha 3(XI) is a post-translational modification of alpha 1(II). Alpha 1(V) can also be found instead of alpha 3(XI)=1(II). In terms of processing, prolines at the third position of the tripeptide repeating unit (G-X-Y) are hydroxylated in some or all of the chains. Post-translationally, N-glycosylated. Cartilage, placenta and some tumor or virally transformed cell lines. Isoforms using exon IIA or IIB are found in the cartilage while isoforms using only exon IIB are found in the tendon.

Its subcellular location is the secreted. It localises to the extracellular space. The protein resides in the extracellular matrix. In terms of biological role, may play an important role in fibrillogenesis by controlling lateral growth of collagen II fibrils. The protein is Collagen alpha-1(XI) chain (COL11A1) of Homo sapiens (Human).